The chain runs to 209 residues: MTKIAIIDYGMGNLRSVQKGFEKVGFEAVVTADPKVVLEAEKIVLPGVGAFRDCMRNLEQGGFVEPILRVIREGRPFLGICVGMQLLLTDSVEFGLYQGLNVIPGHVLRFPEGMREGGEELKVPHMGWNQLSIKRRPPAFAEVEDGANVYFVHSYYEMPDDESVIAATCTYGVEFCAAIWKDNIVATQFHPEKSQAVGLSILKNFGEMK.

Residues 3 to 209 (KIAIIDYGMG…SILKNFGEMK (207 aa)) enclose the Glutamine amidotransferase type-1 domain. Catalysis depends on Cys-81, which acts as the Nucleophile. Catalysis depends on residues His-190 and Glu-192.

As to quaternary structure, heterodimer of HisH and HisF.

The protein resides in the cytoplasm. The enzyme catalyses 5-[(5-phospho-1-deoxy-D-ribulos-1-ylimino)methylamino]-1-(5-phospho-beta-D-ribosyl)imidazole-4-carboxamide + L-glutamine = D-erythro-1-(imidazol-4-yl)glycerol 3-phosphate + 5-amino-1-(5-phospho-beta-D-ribosyl)imidazole-4-carboxamide + L-glutamate + H(+). It carries out the reaction L-glutamine + H2O = L-glutamate + NH4(+). The protein operates within amino-acid biosynthesis; L-histidine biosynthesis; L-histidine from 5-phospho-alpha-D-ribose 1-diphosphate: step 5/9. In terms of biological role, IGPS catalyzes the conversion of PRFAR and glutamine to IGP, AICAR and glutamate. The HisH subunit catalyzes the hydrolysis of glutamine to glutamate and ammonia as part of the synthesis of IGP and AICAR. The resulting ammonia molecule is channeled to the active site of HisF. In Geobacter sulfurreducens (strain ATCC 51573 / DSM 12127 / PCA), this protein is Imidazole glycerol phosphate synthase subunit HisH.